The sequence spans 229 residues: MKKQESVLVGPSIMGADLTCLGVEAKKLEQAGSDFIHIDIMDGHFVPNLTFGPGIIAAINRSTDLFLEVHAMIYNPFEFIESFVRSGADRIIVHFEASEDIKELLSYIKKCGVQAGLAFSPDTSIEFLPSFLPFCDVVVLMSVYPGFTGQSFLPNTIEKIAFARHAIKTLGLKDSCLIEVDGGIDQQSAPLCRDAGADILVTASYLFEADSLAMEDKILLLRGENYGVK.

Substrate is bound at residue Ser-12. Residues His-37, Asp-39, and His-70 each coordinate a divalent metal cation. Asp-39 (proton acceptor) is an active-site residue. Substrate-binding positions include His-70, 146–149 (GFTG), 181–183 (DGG), and 203–204 (AS). Residue Asp-181 participates in a divalent metal cation binding. Residue Asp-181 is the Proton donor of the active site.

The protein belongs to the ribulose-phosphate 3-epimerase family. It depends on a divalent metal cation as a cofactor.

The catalysed reaction is D-ribulose 5-phosphate = D-xylulose 5-phosphate. It participates in carbohydrate degradation. Functionally, catalyzes the reversible epimerization of D-ribulose 5-phosphate to D-xylulose 5-phosphate. The polypeptide is Ribulose-phosphate 3-epimerase (Chlamydia pneumoniae (Chlamydophila pneumoniae)).